A 205-amino-acid chain; its full sequence is Glycerol-3-phosphate acyltransferase (205 aa).

5 helical membrane-spanning segments follow: residues 4 to 24, 80 to 100, 107 to 127, 130 to 150, and 155 to 175; these read IAPG…AILV, PFWL…PVFF, GVAT…GVMA, WLLT…SALI, and VWWF…LILL.

It belongs to the PlsY family. Probably interacts with PlsX.

Its subcellular location is the cell inner membrane. It catalyses the reaction an acyl phosphate + sn-glycerol 3-phosphate = a 1-acyl-sn-glycero-3-phosphate + phosphate. The protein operates within lipid metabolism; phospholipid metabolism. Catalyzes the transfer of an acyl group from acyl-phosphate (acyl-PO(4)) to glycerol-3-phosphate (G3P) to form lysophosphatidic acid (LPA). This enzyme utilizes acyl-phosphate as fatty acyl donor, but not acyl-CoA or acyl-ACP. In Klebsiella pneumoniae subsp. pneumoniae (strain ATCC 700721 / MGH 78578), this protein is Glycerol-3-phosphate acyltransferase.